The following is a 38-amino-acid chain: Large ribosomal subunit protein bL36 (38 aa).

This sequence belongs to the bacterial ribosomal protein bL36 family.

The protein is Large ribosomal subunit protein bL36 of Alcanivorax borkumensis (strain ATCC 700651 / DSM 11573 / NCIMB 13689 / SK2).